The chain runs to 529 residues: ATP synthase F(1) complex subunit beta, mitochondrial (529 aa).

A mitochondrion-targeting transit peptide spans 1 to 47 (MLGFVGRVAAAPASGALRRLTPSASLPPAQLLLRAAPTAVHPVRDYA). The O-linked (GlcNAc) serine glycan is linked to S106. An N6-acetyllysine; alternate mark is found at K124, K133, and K161. An N6-succinyllysine; alternate mark is found at K124, K133, and K161. K198 bears the N6-acetyllysine mark. ADP-binding residues include G209, V210, G211, K212, T213, and V214. G209 serves as a coordination point for ATP. G209, V210, G211, K212, and T213 together coordinate phosphate. ATP contacts are provided by G211, K212, T213, and V214. A Mg(2+)-binding site is contributed by T213. E238 serves as a coordination point for Mg(2+). R239 provides a ligand contact to ATP. 2 positions are modified to N6-acetyllysine; alternate: K259 and K264. An N6-succinyllysine; alternate mark is found at K259 and K264. T312 carries the phosphothreonine modification. Residue S415 is modified to Phosphoserine. K426 is modified (N6-acetyllysine). Position 433 is a phosphoserine (S433). N6-acetyllysine occurs at positions 480 and 485. The residue at position 522 (K522) is an N6-acetyllysine; alternate. K522 carries the N6-succinyllysine; alternate modification. A Phosphoserine modification is found at S529.

Belongs to the ATPase alpha/beta chains family. As to quaternary structure, homotrimer. Component of the ATP synthase complex composed at least of ATP5F1A/subunit alpha, ATP5F1B/subunit beta, ATP5MC1/subunit c (homooctomer), MT-ATP6/subunit a, MT-ATP8/subunit 8, ATP5ME/subunit e, ATP5MF/subunit f, ATP5MG/subunit g, ATP5MK/subunit k, ATP5MJ/subunit j, ATP5F1C/subunit gamma, ATP5F1D/subunit delta, ATP5F1E/subunit epsilon, ATP5PF/subunit F6, ATP5PB/subunit b, ATP5PD/subunit d, ATP5PO/subunit OSCP. ATP synthase complex consists of a soluble F(1) head domain (subunits alpha(3) and beta(3)) - the catalytic core - and a membrane F(0) domain - the membrane proton channel (subunits c, a, 8, e, f, g, k and j). These two domains are linked by a central stalk (subunits gamma, delta, and epsilon) rotating inside the F1 region and a stationary peripheral stalk (subunits F6, b, d, and OSCP). Interacts with PPIF. Interacts with BCL2L1 isoform BCL-X(L); the interaction mediates the association of BCL2L1 isoform BCL-X(L) with the mitochondrial membrane F(1)F(0) ATP synthase and enhances neurons metabolic efficiency. Interacts with CLN5 and PPT1. Interacts with S100A1; this interaction increases F1-ATPase activity. Interacts with MTLN. Interacts with TTC5/STRAP; the interaction results in decreased mitochondrial ATP production. The cofactor is Mg(2+).

It localises to the mitochondrion inner membrane. The catalysed reaction is ATP + H2O + 4 H(+)(in) = ADP + phosphate + 5 H(+)(out). Catalytic subunit beta, of the mitochondrial membrane ATP synthase complex (F(1)F(0) ATP synthase or Complex V) that produces ATP from ADP in the presence of a proton gradient across the membrane which is generated by electron transport complexes of the respiratory chain. ATP synthase complex consist of a soluble F(1) head domain - the catalytic core - and a membrane F(1) domain - the membrane proton channel. These two domains are linked by a central stalk rotating inside the F(1) region and a stationary peripheral stalk. During catalysis, ATP synthesis in the catalytic domain of F(1) is coupled via a rotary mechanism of the central stalk subunits to proton translocation. In vivo, can only synthesize ATP although its ATP hydrolase activity can be activated artificially in vitro. With the subunit alpha (ATP5F1A), forms the catalytic core in the F(1) domain. The chain is ATP synthase F(1) complex subunit beta, mitochondrial from Homo sapiens (Human).